The primary structure comprises 447 residues: Phosphoglucosamine mutase (447 aa).

Ser-104 acts as the Phosphoserine intermediate in catalysis. Mg(2+) contacts are provided by Ser-104, Asp-243, Asp-245, and Asp-247. The residue at position 104 (Ser-104) is a Phosphoserine.

The protein belongs to the phosphohexose mutase family. It depends on Mg(2+) as a cofactor. Activated by phosphorylation.

It catalyses the reaction alpha-D-glucosamine 1-phosphate = D-glucosamine 6-phosphate. Catalyzes the conversion of glucosamine-6-phosphate to glucosamine-1-phosphate. This Corynebacterium aurimucosum (strain ATCC 700975 / DSM 44827 / CIP 107346 / CN-1) (Corynebacterium nigricans) protein is Phosphoglucosamine mutase.